Reading from the N-terminus, the 239-residue chain is Putative 3-methyladenine DNA glycosylase (239 aa).

It belongs to the DNA glycosylase MPG family.

The sequence is that of Putative 3-methyladenine DNA glycosylase from Pseudomonas aeruginosa (strain ATCC 15692 / DSM 22644 / CIP 104116 / JCM 14847 / LMG 12228 / 1C / PRS 101 / PAO1).